The following is a 734-amino-acid chain: Cytoplasmic polyadenylation element-binding protein 3 (734 aa).

Disordered regions lie at residues 1 to 31 (MDRN…RNVP), 98 to 185 (GSKK…AARN), and 220 to 283 (RGSL…LPPR). The segment covering 16 to 26 (PAEHPGDEKSG) has biased composition (basic and acidic residues). Low complexity-rich tracts occupy residues 121-140 (SRRT…SPSR) and 232-242 (KSFSSTTTSSS). A compositionally biased stretch (basic and acidic residues) spans 243–256 (PEKEREKEKEKIEQ). The span at 259-275 (YGTTQRQSVNSQQSSAS) shows a compositional bias: polar residues. Residues 294–316 (IFVGGVPWDITEAALKDSFGEFG) enclose the RRM domain. 2 disordered regions span residues 564–593 (KAYQ…SNNS) and 630–657 (TVYD…SNSN). The span at 576-593 (LSSNSPSKARDGQNSNNS) shows a compositional bias: low complexity.

Cytoplasmic polyadenylation element binding protein that binds to and regulates the translation of specific mRNAs. This Caenorhabditis japonica protein is Cytoplasmic polyadenylation element-binding protein 3 (cpb-3).